The following is a 646-amino-acid chain: Phosphomethylpyrimidine synthase (646 aa).

The segment covering 1–13 has biased composition (polar residues); it reads MNIRSNPDTTRPA. The tract at residues 1–21 is disordered; that stretch reads MNIRSNPDTTRPAVTTGGLPS. Residues Asn221, Met250, Tyr279, His315, 335 to 337, 376 to 379, and Glu415 each bind substrate; these read SRG and DGLR. His419 contributes to the Zn(2+) binding site. Substrate is bound at residue Tyr442. His483 contacts Zn(2+). 3 residues coordinate [4Fe-4S] cluster: Cys563, Cys566, and Cys571.

The protein belongs to the ThiC family. As to quaternary structure, homodimer. [4Fe-4S] cluster serves as cofactor.

It carries out the reaction 5-amino-1-(5-phospho-beta-D-ribosyl)imidazole + S-adenosyl-L-methionine = 4-amino-2-methyl-5-(phosphooxymethyl)pyrimidine + CO + 5'-deoxyadenosine + formate + L-methionine + 3 H(+). It participates in cofactor biosynthesis; thiamine diphosphate biosynthesis. Catalyzes the synthesis of the hydroxymethylpyrimidine phosphate (HMP-P) moiety of thiamine from aminoimidazole ribotide (AIR) in a radical S-adenosyl-L-methionine (SAM)-dependent reaction. This Rhodopseudomonas palustris (strain HaA2) protein is Phosphomethylpyrimidine synthase.